The sequence spans 108 residues: Large ribosomal subunit protein uL24 (108 aa).

This sequence belongs to the universal ribosomal protein uL24 family. As to quaternary structure, part of the 50S ribosomal subunit.

Functionally, one of two assembly initiator proteins, it binds directly to the 5'-end of the 23S rRNA, where it nucleates assembly of the 50S subunit. One of the proteins that surrounds the polypeptide exit tunnel on the outside of the subunit. This chain is Large ribosomal subunit protein uL24, found in Mycoplasma mycoides subsp. mycoides SC (strain CCUG 32753 / NCTC 10114 / PG1).